The primary structure comprises 293 residues: tRNA pseudouridine synthase B (293 aa).

The active-site Nucleophile is the D38.

It belongs to the pseudouridine synthase TruB family. Type 1 subfamily.

The catalysed reaction is uridine(55) in tRNA = pseudouridine(55) in tRNA. Functionally, responsible for synthesis of pseudouridine from uracil-55 in the psi GC loop of transfer RNAs. The sequence is that of tRNA pseudouridine synthase B from Microcystis aeruginosa (strain NIES-843 / IAM M-2473).